The primary structure comprises 123 residues: Ribonuclease P protein component (123 aa).

It belongs to the RnpA family. In terms of assembly, consists of a catalytic RNA component (M1 or rnpB) and a protein subunit.

It carries out the reaction Endonucleolytic cleavage of RNA, removing 5'-extranucleotides from tRNA precursor.. In terms of biological role, RNaseP catalyzes the removal of the 5'-leader sequence from pre-tRNA to produce the mature 5'-terminus. It can also cleave other RNA substrates such as 4.5S RNA. The protein component plays an auxiliary but essential role in vivo by binding to the 5'-leader sequence and broadening the substrate specificity of the ribozyme. This chain is Ribonuclease P protein component, found in Streptomyces griseus subsp. griseus (strain JCM 4626 / CBS 651.72 / NBRC 13350 / KCC S-0626 / ISP 5235).